Consider the following 68-residue polypeptide: Large ribosomal subunit protein bL28 (68 aa).

The interval 1 to 30 (MAKICDHCGKKPQSGNNVSHANNKSKRRFE) is disordered. Polar residues predominate over residues 13–22 (QSGNNVSHAN).

This sequence belongs to the bacterial ribosomal protein bL28 family.

The sequence is that of Large ribosomal subunit protein bL28 from Solidesulfovibrio magneticus (strain ATCC 700980 / DSM 13731 / RS-1) (Desulfovibrio magneticus).